An 878-amino-acid chain; its full sequence is Multiple RNA-binding domain-containing protein 1 (878 aa).

The RRM 1 domain maps to 2–90 (SRVIVKGLPI…SKIEVSMAKS (89 aa)). Disordered regions lie at residues 118 to 143 (LLAD…KHDI), 159 to 269 (TMKP…AKDE), and 287 to 323 (GADT…EKSL). Polar residues predominate over residues 159–177 (TMKPSSQVTSWETVQSSKT). Residues 180 to 190 (EDEEAADDEVG) are compositionally biased toward acidic residues. Residues 295-304 (QQQQPDTEQQ) are compositionally biased toward low complexity. Residues 305–319 (QPEETEVETSQESEE) show a composition bias toward acidic residues. RRM domains are found at residues 330 to 408 (GRLF…PADA), 516 to 588 (RVIL…KGPS), 651 to 734 (VSIF…LSHR), and 752 to 829 (GKII…FVEQ). The disordered stretch occupies residues 732 to 751 (SHRQGTSTTNASSKKKKKNQ). The interval 852–878 (TKIANMRNSGKRKIDLDEDDENDGLQG) is disordered. Residues 867 to 878 (LDEDDENDGLQG) are compositionally biased toward acidic residues.

It belongs to the RRM MRD1 family.

It is found in the nucleus. Involved in pre-rRNA processing. This chain is Multiple RNA-binding domain-containing protein 1 (MRD1), found in Kluyveromyces lactis (strain ATCC 8585 / CBS 2359 / DSM 70799 / NBRC 1267 / NRRL Y-1140 / WM37) (Yeast).